A 356-amino-acid chain; its full sequence is UDP-N-acetylglucosamine--N-acetylmuramyl-(pentapeptide) pyrophosphoryl-undecaprenol N-acetylglucosamine transferase (356 aa).

UDP-N-acetyl-alpha-D-glucosamine contacts are provided by residues 12–14, Asn-124, Arg-163, Ser-188, Ile-242, 261–266, and Gln-287; these read TGG and ALTVSE.

It belongs to the glycosyltransferase 28 family. MurG subfamily.

Its subcellular location is the cell inner membrane. The enzyme catalyses di-trans,octa-cis-undecaprenyl diphospho-N-acetyl-alpha-D-muramoyl-L-alanyl-D-glutamyl-meso-2,6-diaminopimeloyl-D-alanyl-D-alanine + UDP-N-acetyl-alpha-D-glucosamine = di-trans,octa-cis-undecaprenyl diphospho-[N-acetyl-alpha-D-glucosaminyl-(1-&gt;4)]-N-acetyl-alpha-D-muramoyl-L-alanyl-D-glutamyl-meso-2,6-diaminopimeloyl-D-alanyl-D-alanine + UDP + H(+). The protein operates within cell wall biogenesis; peptidoglycan biosynthesis. Cell wall formation. Catalyzes the transfer of a GlcNAc subunit on undecaprenyl-pyrophosphoryl-MurNAc-pentapeptide (lipid intermediate I) to form undecaprenyl-pyrophosphoryl-MurNAc-(pentapeptide)GlcNAc (lipid intermediate II). In Pseudomonas fluorescens (strain ATCC BAA-477 / NRRL B-23932 / Pf-5), this protein is UDP-N-acetylglucosamine--N-acetylmuramyl-(pentapeptide) pyrophosphoryl-undecaprenol N-acetylglucosamine transferase.